Reading from the N-terminus, the 357-residue chain is S-adenosylmethionine:tRNA ribosyltransferase-isomerase (357 aa).

It belongs to the QueA family. In terms of assembly, monomer.

It localises to the cytoplasm. It carries out the reaction 7-aminomethyl-7-carbaguanosine(34) in tRNA + S-adenosyl-L-methionine = epoxyqueuosine(34) in tRNA + adenine + L-methionine + 2 H(+). The protein operates within tRNA modification; tRNA-queuosine biosynthesis. Transfers and isomerizes the ribose moiety from AdoMet to the 7-aminomethyl group of 7-deazaguanine (preQ1-tRNA) to give epoxyqueuosine (oQ-tRNA). In Buchnera aphidicola subsp. Schizaphis graminum (strain Sg), this protein is S-adenosylmethionine:tRNA ribosyltransferase-isomerase.